The chain runs to 112 residues: DNA-directed RNA polymerase subunit Rpo11 (112 aa).

This sequence belongs to the archaeal Rpo11/eukaryotic RPB11/RPC19 RNA polymerase subunit family. In terms of assembly, part of the RNA polymerase complex.

It localises to the cytoplasm. The catalysed reaction is RNA(n) + a ribonucleoside 5'-triphosphate = RNA(n+1) + diphosphate. DNA-dependent RNA polymerase (RNAP) catalyzes the transcription of DNA into RNA using the four ribonucleoside triphosphates as substrates. This Methanopyrus kandleri (strain AV19 / DSM 6324 / JCM 9639 / NBRC 100938) protein is DNA-directed RNA polymerase subunit Rpo11.